A 310-amino-acid polypeptide reads, in one-letter code: N-acetyl-gamma-glutamyl-phosphate reductase (310 aa).

The active site involves C117.

Belongs to the NAGSA dehydrogenase family. Type 2 subfamily.

It localises to the cytoplasm. It carries out the reaction N-acetyl-L-glutamate 5-semialdehyde + phosphate + NADP(+) = N-acetyl-L-glutamyl 5-phosphate + NADPH + H(+). The protein operates within amino-acid biosynthesis; L-arginine biosynthesis; N(2)-acetyl-L-ornithine from L-glutamate: step 3/4. Its function is as follows. Catalyzes the NADPH-dependent reduction of N-acetyl-5-glutamyl phosphate to yield N-acetyl-L-glutamate 5-semialdehyde. This Sinorhizobium medicae (strain WSM419) (Ensifer medicae) protein is N-acetyl-gamma-glutamyl-phosphate reductase.